Here is a 145-residue protein sequence, read N- to C-terminus: Transcription antitermination protein NusB (145 aa).

The protein belongs to the NusB family.

Its function is as follows. Involved in transcription antitermination. Required for transcription of ribosomal RNA (rRNA) genes. Binds specifically to the boxA antiterminator sequence of the ribosomal RNA (rrn) operons. The chain is Transcription antitermination protein NusB from Thiobacillus denitrificans (strain ATCC 25259 / T1).